A 492-amino-acid chain; its full sequence is Spore germination protein GerLA (492 aa).

Transmembrane regions (helical) follow at residues 295 to 315 (IIAV…QGLI), 384 to 404 (FLVI…VYSI), and 410 to 430 (ILLF…IILA).

This sequence belongs to the GerABKA family.

It is found in the membrane. Contributes to the L-alanine germination response. In Bacillus cereus, this protein is Spore germination protein GerLA (gerLA).